We begin with the raw amino-acid sequence, 267 residues long: Indole-3-glycerol phosphate synthase (267 aa).

The protein belongs to the TrpC family.

The catalysed reaction is 1-(2-carboxyphenylamino)-1-deoxy-D-ribulose 5-phosphate + H(+) = (1S,2R)-1-C-(indol-3-yl)glycerol 3-phosphate + CO2 + H2O. It participates in amino-acid biosynthesis; L-tryptophan biosynthesis; L-tryptophan from chorismate: step 4/5. The protein is Indole-3-glycerol phosphate synthase of Polynucleobacter asymbioticus (strain DSM 18221 / CIP 109841 / QLW-P1DMWA-1) (Polynucleobacter necessarius subsp. asymbioticus).